Here is a 343-residue protein sequence, read N- to C-terminus: Ribosomal RNA small subunit methyltransferase C (343 aa).

It belongs to the methyltransferase superfamily. RsmC family. In terms of assembly, monomer.

Its subcellular location is the cytoplasm. It carries out the reaction guanosine(1207) in 16S rRNA + S-adenosyl-L-methionine = N(2)-methylguanosine(1207) in 16S rRNA + S-adenosyl-L-homocysteine + H(+). Specifically methylates the guanine in position 1207 of 16S rRNA in the 30S particle. The polypeptide is Ribosomal RNA small subunit methyltransferase C (Shigella sonnei (strain Ss046)).